Consider the following 372-residue polypeptide: tRNA-specific 2-thiouridylase MnmA (372 aa).

Residues 17 to 24 and Met-43 contribute to the ATP site; that span reads GMSGGVDS. The interval 103–105 is interaction with target base in tRNA; the sequence is NPD. Cys-108 functions as the Nucleophile in the catalytic mechanism. Cysteines 108 and 205 form a disulfide. Gly-133 serves as a coordination point for ATP. An interaction with tRNA region spans residues 155 to 157; the sequence is KDQ. Cys-205 serves as the catalytic Cysteine persulfide intermediate. The tract at residues 317–318 is interaction with tRNA; that stretch reads RY.

This sequence belongs to the MnmA/TRMU family.

It localises to the cytoplasm. It catalyses the reaction S-sulfanyl-L-cysteinyl-[protein] + uridine(34) in tRNA + AH2 + ATP = 2-thiouridine(34) in tRNA + L-cysteinyl-[protein] + A + AMP + diphosphate + H(+). In terms of biological role, catalyzes the 2-thiolation of uridine at the wobble position (U34) of tRNA, leading to the formation of s(2)U34. The sequence is that of tRNA-specific 2-thiouridylase MnmA from Shewanella sediminis (strain HAW-EB3).